Consider the following 203-residue polypeptide: Probable chemoreceptor glutamine deamidase CheD (203 aa).

This sequence belongs to the CheD family.

It carries out the reaction L-glutaminyl-[protein] + H2O = L-glutamyl-[protein] + NH4(+). Functionally, probably deamidates glutamine residues to glutamate on methyl-accepting chemotaxis receptors (MCPs), playing an important role in chemotaxis. The sequence is that of Probable chemoreceptor glutamine deamidase CheD from Janthinobacterium sp. (strain Marseille) (Minibacterium massiliensis).